The sequence spans 372 residues: MEYEGYNDSSIYGEEYSDGSDYIVDLEEAGPLEAKVAEVFLVVIYSLVCFLGILGNGLVIVIATFKMKKTVNTVWFVNLAVADFLFNIFLPIHITYAAMDYHWVFGKAMCKISSFLLSHNMYTSVFLLTVISFDRCISVLLPVWSQNHRSVRLAYMTCVVVWVLAFFLSSPSLVFRDTVSTSHGKITCFNNFSLAAPEPFSHSTHPRTDPVGYSRHVAVTVTRFLCGFLIPVFIITACYLTIVFKLQRNRLAKTKKPFKIIITIIITFFLCWCPYHTLYLLELHHTAVPASVFSLGLPLATAVAIANSCMNPILYVFMGHDFKKFKVALFSRLVNALSEDTGPSSYPSHRSFTKMSSLIEKASVNEKETSTL.

Over 1-39 the chain is Extracellular; that stretch reads MEYEGYNDSSIYGEEYSDGSDYIVDLEEAGPLEAKVAEV. The N-linked (GlcNAc...) asparagine glycan is linked to Asn-7. Residues 40 to 62 form a helical membrane-spanning segment; it reads FLVVIYSLVCFLGILGNGLVIVI. At 63-73 the chain is on the cytoplasmic side; the sequence is ATFKMKKTVNT. Residues 74–95 form a helical membrane-spanning segment; it reads VWFVNLAVADFLFNIFLPIHIT. At 96-112 the chain is on the extracellular side; sequence YAAMDYHWVFGKAMCKI. A disulfide bond links Cys-110 and Cys-188. A helical membrane pass occupies residues 113-133; that stretch reads SSFLLSHNMYTSVFLLTVISF. Topologically, residues 134-152 are cytoplasmic; sequence DRCISVLLPVWSQNHRSVR. Residues 153-174 traverse the membrane as a helical segment; the sequence is LAYMTCVVVWVLAFFLSSPSLV. The Extracellular segment spans residues 175-223; it reads FRDTVSTSHGKITCFNNFSLAAPEPFSHSTHPRTDPVGYSRHVAVTVTR. Residue Asn-191 is glycosylated (N-linked (GlcNAc...) asparagine). Residues 224 to 244 form a helical membrane-spanning segment; that stretch reads FLCGFLIPVFIITACYLTIVF. The Cytoplasmic portion of the chain corresponds to 245-260; it reads KLQRNRLAKTKKPFKI. The helical transmembrane segment at 261 to 281 threads the bilayer; the sequence is IITIIITFFLCWCPYHTLYLL. Over 282 to 299 the chain is Extracellular; the sequence is ELHHTAVPASVFSLGLPL. Residues 300–319 form a helical membrane-spanning segment; sequence ATAVAIANSCMNPILYVFMG. Residues 320 to 372 are Cytoplasmic-facing; sequence HDFKKFKVALFSRLVNALSEDTGPSSYPSHRSFTKMSSLIEKASVNEKETSTL. Ser-338 is modified (phosphoserine). Thr-341 bears the Phosphothreonine mark. A phosphoserine mark is found at Ser-348, Ser-351, and Ser-357. Thr-371 carries the post-translational modification Phosphothreonine.

The protein belongs to the chemokine-like receptor (CMKLR) family. In terms of tissue distribution, high expression in heart and lung, low in small intestines, colon, kidney, liver, uterus and brain.

It localises to the cell membrane. Its function is as follows. Receptor for the chemoattractant adipokine chemerin/RARRES2 and for the omega-3 fatty acid derived molecule resolvin E1. Interaction with RARRES2 initiates activation of G proteins G(i)/G(o) and beta-arrestin pathways inducing cellular responses via second messenger pathways such as intracellular calcium mobilization, phosphorylation of MAP kinases MAPK1/MAPK3 (ERK1/2), TYRO3, MAPK14/P38MAPK and PI3K leading to multifunctional effects, like, reduction of immune responses, enhancing of adipogenesis and angionesis. Resolvin E1 down-regulates cytokine production in macrophages by reducing the activation of MAPK1/3 (ERK1/2) and NF-kappa-B. Positively regulates adipogenesis and adipocyte metabolism. This is Chemerin-like receptor 1 (Cmklr1) from Rattus norvegicus (Rat).